The primary structure comprises 875 residues: Phosphatidylinositol 3-kinase VPS34 (875 aa).

Residues 14–188 (LDVPLKVKIK…WLDEITISKL (175 aa)) form the C2 PI3K-type domain. One can recognise a PIK helical domain in the interval 293–526 (LDKQVKPDIK…SSFWSRLDKK (234 aa)). One can recognise a PI3K/PI4K catalytic domain in the interval 593–859 (CPETSKVFKS…LINDSVNALL (267 aa)). The interval 599-605 (VFKSSLS) is G-loop. The segment at 728–736 (GVGDRHLDN) is catalytic loop. Residues 747-768 (HADFGYILGQDPKPFPPLMKLP) form an activation loop region.

The protein belongs to the PI3/PI4-kinase family. In terms of assembly, component of the autophagy-specific VPS34 PI3-kinase complex I composed of VPS15, VPS30, VPS34, ATG14 and ATG38, and of the VPS34 PI3-kinase complex II composed of VPS15, VPS30, VPS34 and VPS38. Interacts directly with ATG38. Interacts directly with VPS34. In terms of processing, autophosphorylated. Might also be phosphorylated by VPS15.

It is found in the golgi apparatus. Its subcellular location is the trans-Golgi network membrane. The protein resides in the endosome membrane. The catalysed reaction is a 1,2-diacyl-sn-glycero-3-phospho-(1D-myo-inositol) + ATP = a 1,2-diacyl-sn-glycero-3-phospho-(1D-myo-inositol-3-phosphate) + ADP + H(+). With respect to regulation, phosphatidylinositol 3-kinase activity is directly dependent on VPS15 protein kinase activity. Its function is as follows. Phosphatidylinositol 3-kinase required for cytoplasm to vacuole transport (Cvt) and autophagy as a part of the autophagy-specific VPS34 PI3-kinase complex I. This complex is essential to recruit the ATG8-phosphatidylinositol conjugate and the ATG12-ATG5 conjugate to the pre-autophagosomal structure. Also involved in endosome-to-Golgi retrograde transport as part of the VPS34 PI3-kinase complex II. This second complex is required for the endosome-to-Golgi retrieval of PEP1 and KEX2, and the recruitment of VPS5 and VPS7, two components of the retromer complex, to endosomal membranes (probably through the synthesis of a specific pool of phosphatidylinositol 3-phosphate recruiting the retromer to the endosomes). Its activation by VPS15 may lead to the phosphorylation of phosphatidylinositol in the sorting compartment membrane. Finally, it might also be involved in ethanol tolerance and cell wall integrity. This chain is Phosphatidylinositol 3-kinase VPS34 (VPS34), found in Saccharomyces cerevisiae (strain ATCC 204508 / S288c) (Baker's yeast).